The chain runs to 255 residues: Imidazole glycerol phosphate synthase subunit HisF (255 aa).

Active-site residues include aspartate 11 and aspartate 130.

This sequence belongs to the HisA/HisF family. Heterodimer of HisH and HisF.

It localises to the cytoplasm. The enzyme catalyses 5-[(5-phospho-1-deoxy-D-ribulos-1-ylimino)methylamino]-1-(5-phospho-beta-D-ribosyl)imidazole-4-carboxamide + L-glutamine = D-erythro-1-(imidazol-4-yl)glycerol 3-phosphate + 5-amino-1-(5-phospho-beta-D-ribosyl)imidazole-4-carboxamide + L-glutamate + H(+). The protein operates within amino-acid biosynthesis; L-histidine biosynthesis; L-histidine from 5-phospho-alpha-D-ribose 1-diphosphate: step 5/9. IGPS catalyzes the conversion of PRFAR and glutamine to IGP, AICAR and glutamate. The HisF subunit catalyzes the cyclization activity that produces IGP and AICAR from PRFAR using the ammonia provided by the HisH subunit. The chain is Imidazole glycerol phosphate synthase subunit HisF from Campylobacter lari (strain RM2100 / D67 / ATCC BAA-1060).